Reading from the N-terminus, the 132-residue chain is Small ribosomal subunit protein uS8 (132 aa).

It belongs to the universal ribosomal protein uS8 family. Part of the 30S ribosomal subunit. Contacts proteins S5 and S12.

One of the primary rRNA binding proteins, it binds directly to 16S rRNA central domain where it helps coordinate assembly of the platform of the 30S subunit. The sequence is that of Small ribosomal subunit protein uS8 from Geobacillus kaustophilus (strain HTA426).